A 96-amino-acid polypeptide reads, in one-letter code: Large ribosomal subunit protein bL27 (96 aa).

Positions 1 to 9 (MLKFDIQHF) are excised as a propeptide. The tract at residues 1–33 (MLKFDIQHFAHKKGGGSTSNGRDSESKRLGAKR) is disordered. Basic and acidic residues predominate over residues 22-33 (RDSESKRLGAKR).

This sequence belongs to the bacterial ribosomal protein bL27 family. In terms of processing, the N-terminus is cleaved by ribosomal processing cysteine protease Prp.

This is Large ribosomal subunit protein bL27 from Listeria innocua serovar 6a (strain ATCC BAA-680 / CLIP 11262).